The following is a 245-amino-acid chain: Thymidylate kinase (245 aa).

Residue 55-62 (GIDGVGKS) participates in ATP binding.

This sequence belongs to the thymidylate kinase family.

It carries out the reaction dTMP + ATP = dTDP + ADP. Phosphorylation of dTMP to form dTDP in both de novo and salvage pathways of dTTP synthesis. The sequence is that of Thymidylate kinase from Rhodopirellula baltica (strain DSM 10527 / NCIMB 13988 / SH1).